We begin with the raw amino-acid sequence, 198 residues long: Lipoprotein signal peptidase (198 aa).

The disordered stretch occupies residues 1–34 (MDDERVSQDPTAENETDAEDRNDDDPSGSAPPQP). Residues 12-26 (AENETDAEDRNDDDP) are compositionally biased toward acidic residues. Helical transmembrane passes span 42-62 (LLFV…ILAV), 92-112 (MATG…IGVV), and 120-140 (SPWW…NLVD). Active-site residues include D155 and D169. Residues 167-187 (VADSGIVCGAILLVVLTLIGL) traverse the membrane as a helical segment.

It belongs to the peptidase A8 family.

Its subcellular location is the cell membrane. It carries out the reaction Release of signal peptides from bacterial membrane prolipoproteins. Hydrolyzes -Xaa-Yaa-Zaa-|-(S,diacylglyceryl)Cys-, in which Xaa is hydrophobic (preferably Leu), and Yaa (Ala or Ser) and Zaa (Gly or Ala) have small, neutral side chains.. The protein operates within protein modification; lipoprotein biosynthesis (signal peptide cleavage). This protein specifically catalyzes the removal of signal peptides from prolipoproteins. The polypeptide is Lipoprotein signal peptidase (Rhodococcus jostii (strain RHA1)).